Reading from the N-terminus, the 250-residue chain is Small ribosomal subunit protein uS2 (250 aa).

Belongs to the universal ribosomal protein uS2 family.

This chain is Small ribosomal subunit protein uS2, found in Teredinibacter turnerae (strain ATCC 39867 / T7901).